We begin with the raw amino-acid sequence, 634 residues long: Biosynthetic arginine decarboxylase (634 aa).

Lys103 is subject to N6-(pyridoxal phosphate)lysine. 283-293 (FDVGGGLGVDY) lines the substrate pocket.

Belongs to the Orn/Lys/Arg decarboxylase class-II family. SpeA subfamily. The cofactor is Mg(2+). It depends on pyridoxal 5'-phosphate as a cofactor.

It catalyses the reaction L-arginine + H(+) = agmatine + CO2. The protein operates within amine and polyamine biosynthesis; agmatine biosynthesis; agmatine from L-arginine: step 1/1. Its function is as follows. Catalyzes the biosynthesis of agmatine from arginine. The sequence is that of Biosynthetic arginine decarboxylase from Photorhabdus laumondii subsp. laumondii (strain DSM 15139 / CIP 105565 / TT01) (Photorhabdus luminescens subsp. laumondii).